A 285-amino-acid polypeptide reads, in one-letter code: MLYLTKIRNAESEFTENEQKIADFLRANVSELKSVSSRKMAKQLGISQSSIVKFAQKLGAQGFTELRMALIGEYSASREKTNATALHLHSSITSDDSLEVIARKLNREKELALEQTCALFDYARLQKIIEVISKAPFIQITGLGGSALVGRDLSFKLMKIGYRVAYEADTHVQATVSQALKKGDVQIAISYSGSKKEIVLCAEAARKQGATVIAITSLADSPLRRLAHFTLDTVSGETEWRSSSMSTRTAQNSVTDLLFVGLVQLNDVESLKMIQRSSELTQRLK.

The region spanning 1–77 (MLYLTKIRNA…MALIGEYSAS (77 aa)) is the HTH rpiR-type domain. A DNA-binding region (H-T-H motif) is located at residues 37–56 (SRKMAKQLGISQSSIVKFAQ). The SIS domain occupies 128–268 (IIEVISKAPF…FVGLVQLNDV (141 aa)).

As to quaternary structure, homotetramer.

It participates in amino-sugar metabolism; N-acetylmuramate degradation [regulation]. Its function is as follows. Represses the expression of the murPQ operon involved in the uptake and degradation of N-acetylmuramic acid (MurNAc). Binds to two adjacent inverted repeats within the operator region. MurNAc 6-phosphate, the substrate of MurQ, is the specific inducer that weakens binding of MurR to the operator. The chain is HTH-type transcriptional regulator MurR from Shigella sonnei (strain Ss046).